The sequence spans 784 residues: LPS-assembly protein LptD (784 aa).

The N-terminal stretch at 1-24 (MKKRIPTLLATMIATALYSQQGLA) is a signal peptide. 2 cysteine pairs are disulfide-bonded: Cys-31–Cys-724 and Cys-173–Cys-725.

It belongs to the LptD family. As to quaternary structure, component of the lipopolysaccharide transport and assembly complex. Interacts with LptE and LptA. Contains two intramolecular disulfide bonds.

The protein localises to the cell outer membrane. Together with LptE, is involved in the assembly of lipopolysaccharide (LPS) at the surface of the outer membrane. In Escherichia coli O157:H7, this protein is LPS-assembly protein LptD.